A 181-amino-acid polypeptide reads, in one-letter code: Oligoribonuclease (181 aa).

Residues 8 to 171 (LIWIDLEMTG…QDIQESIAEL (164 aa)) enclose the Exonuclease domain. The active site involves Y129.

The protein belongs to the oligoribonuclease family.

It is found in the cytoplasm. Its function is as follows. 3'-to-5' exoribonuclease specific for small oligoribonucleotides. In Shewanella baltica (strain OS155 / ATCC BAA-1091), this protein is Oligoribonuclease.